Here is a 202-residue protein sequence, read N- to C-terminus: uncharacterized protein (202 aa).

The tract at residues 1-20 is disordered; the sequence is MVGAVTQIADRPTDPSPWSP. In terms of domain architecture, HTH tetR-type spans 19–79; sequence SPRETELLAV…AAFIEGIRQV (61 aa).

This is an uncharacterized protein from Mycobacterium bovis (strain ATCC BAA-935 / AF2122/97).